A 250-amino-acid chain; its full sequence is Cruxrhodopsin-1 (250 aa).

Over 1–9 the chain is Extracellular; the sequence is MPEPGSEAI. The chain crosses the membrane as a helical span at residues 10 to 27; it reads WLWLGTAGMFLGMLYFIA. Over 28–41 the chain is Cytoplasmic; that stretch reads RGWGETDSRRQKFY. A helical transmembrane segment spans residues 42–60; sequence IATILITAIAFVNYLAMAL. Residues 61–77 lie on the Extracellular side of the membrane; sequence GFGLTIVEFAGEEHPIY. A helical membrane pass occupies residues 78-94; it reads WARYSDWLFTTPLLLYD. The Cytoplasmic portion of the chain corresponds to 95–105; that stretch reads LGLLAGADRNT. Residues 106–125 form a helical membrane-spanning segment; sequence ITSLVSLDVLMIGTGLVATL. Residues 126–138 are Extracellular-facing; that stretch reads SPGSGVLSAGAER. The helical transmembrane segment at 139–158 threads the bilayer; that stretch reads LVWWGISTAFLLVLLYFLFS. The Cytoplasmic segment spans residues 159–176; the sequence is SLSGRVADLPSDTRSTFK. A helical membrane pass occupies residues 177-195; that stretch reads TLRNLVTVVWLVYPVWWLI. Over 196–207 the chain is Extracellular; sequence GTEGIGLVGIGI. Residues 208–227 traverse the membrane as a helical segment; sequence ETAGFMVIDLTAKVGFGIIL. An N6-(retinylidene)lysine modification is found at K220. Topologically, residues 228–250 are cytoplasmic; sequence LRSHGVLDGAAETTGTGATPADD.

The protein belongs to the archaeal/bacterial/fungal opsin family. Homotrimer.

It localises to the cell membrane. Functionally, light-driven proton pump. The sequence is that of Cruxrhodopsin-1 (cop1) from Haloarcula argentinensis.